The following is a 254-amino-acid chain: Triosephosphate isomerase (254 aa).

Position 10–12 (10–12 (NWK)) interacts with substrate. The active-site Electrophile is H96. Residue E168 is the Proton acceptor of the active site. Residues G174, S214, and 235-236 (GG) each bind substrate.

This sequence belongs to the triosephosphate isomerase family. In terms of assembly, homodimer.

It is found in the cytoplasm. It catalyses the reaction D-glyceraldehyde 3-phosphate = dihydroxyacetone phosphate. The protein operates within carbohydrate biosynthesis; gluconeogenesis. Its pathway is carbohydrate degradation; glycolysis; D-glyceraldehyde 3-phosphate from glycerone phosphate: step 1/1. In terms of biological role, involved in the gluconeogenesis. Catalyzes stereospecifically the conversion of dihydroxyacetone phosphate (DHAP) to D-glyceraldehyde-3-phosphate (G3P). This chain is Triosephosphate isomerase, found in Rhodopirellula baltica (strain DSM 10527 / NCIMB 13988 / SH1).